Reading from the N-terminus, the 545-residue chain is CTP synthase (545 aa).

The amidoligase domain stretch occupies residues 1–266 (MKTNYIFVTG…DDYICKRFSL (266 aa)). Ser14 provides a ligand contact to CTP. Ser14 contributes to the UTP binding site. ATP is bound by residues 15–20 (SLGKGI) and Asp72. Mg(2+)-binding residues include Asp72 and Glu140. Residues 147–149 (DIE), 187–192 (KTKPTQ), and Lys223 contribute to the CTP site. Residues 187 to 192 (KTKPTQ) and Lys223 contribute to the UTP site. Residue 239–241 (KDV) coordinates ATP. In terms of domain architecture, Glutamine amidotransferase type-1 spans 291–542 (TIGMVGKYVE…VKAAGKYQKG (252 aa)). Gly352 serves as a coordination point for L-glutamine. Residue Cys379 is the Nucleophile; for glutamine hydrolysis of the active site. Residues 380-383 (LGMQ), Glu403, and Arg470 contribute to the L-glutamine site. Catalysis depends on residues His515 and Glu517.

This sequence belongs to the CTP synthase family. In terms of assembly, homotetramer.

The catalysed reaction is UTP + L-glutamine + ATP + H2O = CTP + L-glutamate + ADP + phosphate + 2 H(+). The enzyme catalyses L-glutamine + H2O = L-glutamate + NH4(+). It carries out the reaction UTP + NH4(+) + ATP = CTP + ADP + phosphate + 2 H(+). It participates in pyrimidine metabolism; CTP biosynthesis via de novo pathway; CTP from UDP: step 2/2. Allosterically activated by GTP, when glutamine is the substrate; GTP has no effect on the reaction when ammonia is the substrate. The allosteric effector GTP functions by stabilizing the protein conformation that binds the tetrahedral intermediate(s) formed during glutamine hydrolysis. Inhibited by the product CTP, via allosteric rather than competitive inhibition. In terms of biological role, catalyzes the ATP-dependent amination of UTP to CTP with either L-glutamine or ammonia as the source of nitrogen. Regulates intracellular CTP levels through interactions with the four ribonucleotide triphosphates. The protein is CTP synthase of Photorhabdus laumondii subsp. laumondii (strain DSM 15139 / CIP 105565 / TT01) (Photorhabdus luminescens subsp. laumondii).